The sequence spans 516 residues: MNSGGEEPTIKPNVFNITQLLNSNGEKPGIACIFLSKFDMKKGNIIIWSKSINGAAIDLSNIEFKSLPAGIHEQTDDVVNFVVPKELDVCQTAKTTTYDYGIAYFKQNSFDIIENDNRIDRSKVQMFSLGVIIDVQNASSDSKKHFYKEIYHAYAANRYSSYLESLLGQWIRQRDLDKFDIFEKFFDENNQGHMAENSVEVFEHSPKERRHLVEYLPYWTRKLGPLIFPLWKASLLQSRILILVPQGESFELCNSLAYCVFLISMLPKNLIGNHVSDEYIKPIFTVSTSDIPFLESFKKGNGYVATTSEEILLYKPEIYDIVVKLTSSSTIEESPEKEVEILTASGEQNKATPLDLEVYEKLILGELQEDASTNATCRHHEVTEPISWLQFLIDGFFLLTTAGYLVAPYHLANNFKIPRHVSGPEPNNSEIQIAENLVRYFHRRTSNLYNDLKDVIQKSENIDSEQPITIAASFLTKLNLDCFSKQDHQFVKDIALKWFQRSIDISNLPECLGNLC.

Positions 31–185 (ACIFLSKFDM…LDKFDIFEKF (155 aa)) constitute a uDENN domain. Residues 211–365 (HLVEYLPYWT…LEVYEKLILG (155 aa)) form the cDENN domain. One can recognise a dDENN domain in the interval 367–513 (LQEDASTNAT…DISNLPECLG (147 aa)). 2 S-palmitoyl cysteine lipidation sites follow: cysteine 511 and cysteine 516.

In terms of processing, palmitoylated by AKR1.

It is found in the lipid droplet. Functionally, may be involved in lipid metabolism. This is an uncharacterized protein from Saccharomyces cerevisiae (strain ATCC 204508 / S288c) (Baker's yeast).